Consider the following 491-residue polypeptide: UDP-GalNAc:beta-1,3-N-acetylgalactosaminyltransferase 2 (491 aa).

Topologically, residues 1 to 2 (MR) are cytoplasmic. A helical; Signal-anchor for type II membrane protein membrane pass occupies residues 3–23 (SAAAALSVCVLAVLLHWICWT). At 24–491 (DRSAELLGFR…NKCGDPCGCS (468 aa)) the chain is on the lumenal side. 2 N-linked (GlcNAc...) asparagine glycosylation sites follow: N167 and N230.

This sequence belongs to the glycosyltransferase 31 family.

The protein localises to the golgi apparatus membrane. The protein resides in the endoplasmic reticulum. It carries out the reaction 3-O-(N-acetyl-beta-D-glucosaminyl-(1-&gt;4)-alpha-D-mannosyl)-L-threonyl-[protein] + UDP-N-acetyl-alpha-D-galactosamine = 3-O-[beta-D-GalNAc-(1-&gt;3)-beta-D-GlcNAc-(1-&gt;4)-alpha-D-Man]-L-Thr-[protein] + UDP + H(+). The protein operates within protein modification; protein glycosylation. Its function is as follows. Beta-1,3-N-acetylgalactosaminyltransferase that synthesizes a unique carbohydrate structure, GalNAc-beta-1-3GlcNAc, on N- and O-glycans. Has no galactose nor galactosaminyl transferase activity toward any acceptor substrate. Involved in alpha-dystroglycan (dag1) glycosylation. In Danio rerio (Zebrafish), this protein is UDP-GalNAc:beta-1,3-N-acetylgalactosaminyltransferase 2 (b3galnt2).